The following is a 319-amino-acid chain: Acetyl esterase (319 aa).

Positions histidine 91–glycine 93 match the Involved in the stabilization of the negatively charged intermediate by the formation of the oxyanion hole motif. Catalysis depends on residues serine 165, aspartate 262, and histidine 292.

Belongs to the 'GDXG' lipolytic enzyme family. In terms of assembly, homodimer. Interacts with MalT and MelA.

The protein resides in the cytoplasm. Functionally, displays esterase activity towards short chain fatty esters (acyl chain length of up to 8 carbons). Able to hydrolyze triacetylglycerol (triacetin) and tributyrylglycerol (tributyrin), but not trioleylglycerol (triolein) or cholesterol oleate. Negatively regulates MalT activity by antagonizing maltotriose binding. Inhibits MelA galactosidase activity. This chain is Acetyl esterase, found in Escherichia coli O127:H6 (strain E2348/69 / EPEC).